We begin with the raw amino-acid sequence, 959 residues long: Glycine dehydrogenase (decarboxylating) (959 aa).

K708 is modified (N6-(pyridoxal phosphate)lysine).

Belongs to the GcvP family. As to quaternary structure, the glycine cleavage system is composed of four proteins: P, T, L and H. Pyridoxal 5'-phosphate is required as a cofactor.

It catalyses the reaction N(6)-[(R)-lipoyl]-L-lysyl-[glycine-cleavage complex H protein] + glycine + H(+) = N(6)-[(R)-S(8)-aminomethyldihydrolipoyl]-L-lysyl-[glycine-cleavage complex H protein] + CO2. Functionally, the glycine cleavage system catalyzes the degradation of glycine. The P protein binds the alpha-amino group of glycine through its pyridoxal phosphate cofactor; CO(2) is released and the remaining methylamine moiety is then transferred to the lipoamide cofactor of the H protein. The sequence is that of Glycine dehydrogenase (decarboxylating) from Serratia proteamaculans (strain 568).